The sequence spans 475 residues: ATP synthase subunit beta (475 aa).

ATP is bound at residue 152–159 (GGAGVGKT).

It belongs to the ATPase alpha/beta chains family. In terms of assembly, F-type ATPases have 2 components, CF(1) - the catalytic core - and CF(0) - the membrane proton channel. CF(1) has five subunits: alpha(3), beta(3), gamma(1), delta(1), epsilon(1). CF(0) has four main subunits: a(1), b(1), b'(1) and c(9-12).

The protein resides in the cell inner membrane. The enzyme catalyses ATP + H2O + 4 H(+)(in) = ADP + phosphate + 5 H(+)(out). In terms of biological role, produces ATP from ADP in the presence of a proton gradient across the membrane. The catalytic sites are hosted primarily by the beta subunits. This chain is ATP synthase subunit beta, found in Cereibacter sphaeroides (strain ATCC 17025 / ATH 2.4.3) (Rhodobacter sphaeroides).